We begin with the raw amino-acid sequence, 267 residues long: Cell division protein FtsQ (267 aa).

Residues 1 to 32 (MRQKTISNKNKQTKNTNNISLRRKLGLMYKKA) lie on the Cytoplasmic side of the membrane. Residues 33–53 (ILVLKIVLMIFVCLFVFTKYF) form a helical membrane-spanning segment. Residues 54 to 267 (TSIKTYLITN…DRNKYYIQKY (214 aa)) are Periplasmic-facing. A POTRA domain is found at 73 to 141 (FRLENVIIEG…NTVYIKLFER (69 aa)).

The protein belongs to the FtsQ/DivIB family. FtsQ subfamily.

The protein localises to the cell inner membrane. In terms of biological role, essential cell division protein. The sequence is that of Cell division protein FtsQ from Rickettsia prowazekii (strain Madrid E).